The chain runs to 374 residues: Trehalose-phosphate phosphatase B (374 aa).

It belongs to the trehalose phosphatase family. Requires a divalent metal cation as cofactor. Expressed in flowers.

The catalysed reaction is alpha,alpha-trehalose 6-phosphate + H2O = alpha,alpha-trehalose + phosphate. Its pathway is glycan biosynthesis; trehalose biosynthesis. Its function is as follows. Removes the phosphate from trehalose 6-phosphate to produce free trehalose. Trehalose accumulation in plant may improve abiotic stress tolerance. The protein is Trehalose-phosphate phosphatase B (TPPB) of Arabidopsis thaliana (Mouse-ear cress).